The chain runs to 385 residues: ELAV-like protein 4 (385 aa).

The interval 12 to 48 is disordered; sequence TMEPQVSNGPTSNTSNGPSSNNRNCPSPMQTGATTDD. Positions 18–33 are enriched in low complexity; that stretch reads SNGPTSNTSNGPSSNN. Residues 34–48 are compositionally biased toward polar residues; it reads RNCPSPMQTGATTDD. The residue at position 38 (Ser38) is a Phosphoserine. RRM domains follow at residues 51–129 and 137–217; these read TNLI…YARP and ANLY…FANN. Ser233 carries the post-translational modification Phosphoserine. Residue Arg248 is modified to Asymmetric dimethylarginine; by CARM1; alternate. Omega-N-methylarginine; by CARM1; alternate is present on Arg248. Residues 302–380 form the RRM 3 domain; that stretch reads WCIFVYNLSP…RVLQVSFKTN (79 aa).

The protein belongs to the RRM elav family. As to quaternary structure, component of a TAU mRNP complex, at least composed of IGF2BP1, ELAVL4 and G3BP. Associates with the EIF4F cap-binding complex, composed of EIF4G, EIF4A, EIF4E and PABP. Within the EIF4F cap-binding complex, interacts with EIF4A. Interacts with SMN (via Tudor domain) in an RNA-independent manner; the interaction is required for localization of ELAVL4 to RNA granules. Interacts with MAP1 light chain LC1 (via C-terminus); the interaction contributes to the association of ELAVL4 with microtubules. Interacts with MAP1 light chain LC2. Post-translationally, methylated by CARM1, which leads to reduced RNA-binding activity and enhanced interaction with SMN. Methylation at Arg-248 by CARM1 weakens protective binding to the 3'UTR of CDKN1A mRNA and down-regulates CDKN1A protein expression, thereby maintaining cells in a proliferative state. Methylation is inhibited by NGF, which facilitates neurite outgrowth. Expressed in pancreatic beta cells (at protein level). Expressed in the brain.

Its subcellular location is the cytoplasm. It is found in the perikaryon. The protein localises to the cell projection. The protein resides in the dendrite. It localises to the axon. Its subcellular location is the growth cone. Its function is as follows. RNA-binding protein that is involved in the post-transcriptional regulation of mRNAs. Plays a role in the regulation of mRNA stability, alternative splicing and translation. Binds to AU-rich element (ARE) sequences in the 3' untranslated region (UTR) of target mRNAs, including GAP43, VEGF, FOS, CDKN1A and ACHE mRNA. Many of the target mRNAs are coding for RNA-binding proteins, transcription factors and proteins involved in RNA processing and/or neuronal development and function. By binding to the mRNA 3'UTR, decreases mRNA deadenylation and thereby contributes to the stabilization of mRNA molecules and their protection from decay. Also binds to the polyadenylated (poly(A)) tail in the 3'UTR of mRNA, thereby increasing its affinity for mRNA binding. Mainly plays a role in neuron-specific RNA processing by stabilization of mRNAs such as GAP43, ACHE and mRNAs of other neuronal proteins, thereby contributing to the differentiation of neural progenitor cells, nervous system development, learning and memory mechanisms. Involved in the negative regulation of the proliferative activity of neuronal stem cells and in the positive regulation of neuronal differentiation of neural progenitor cells. Promotes neuronal differentiation of neural stem/progenitor cells in the adult subventricular zone of the hippocampus by binding to and stabilizing SATB1 mRNA. Binds and stabilizes MSI1 mRNA in neural stem cells. Exhibits increased binding to ACHE mRNA during neuronal differentiation, thereby stabilizing ACHE mRNA and enhancing its expression. Protects CDKN1A mRNA from decay by binding to its 3'-UTR. May bind to APP and BACE1 mRNAS and the BACE1AS lncRNA and enhance their stabilization. Plays a role in neurite outgrowth and in the establishment and maturation of dendritic arbors, thereby contributing to neocortical and hippocampal circuitry function. Stabilizes GAP43 mRNA and protects it from decay during postembryonic development in the brain. By promoting the stabilization of GAP43 mRNA, plays a role in NGF-mediated neurite outgrowth. Binds to BDNF long 3'UTR mRNA, thereby leading to its stabilization and increased dendritic translation after activation of PKC. By increasing translation of BDNF after nerve injury, may contribute to nerve regeneration. Acts as a stabilizing factor by binding to the 3'UTR of NOVA1 mRNA, thereby increasing its translation and enhancing its functional activity in neuron-specific splicing. Stimulates translation of mRNA in a poly(A)- and cap-dependent manner, possibly by associating with the EIF4F cap-binding complex. May also negatively regulate translation by binding to the 5'UTR of Ins2 mRNA, thereby repressing its translation. Upon glucose stimulation, Ins2 mRNA is released from ELAVL4 and translational inhibition is abolished. Also plays a role in the regulation of alternative splicing. May regulate alternative splicing of CALCA pre-mRNA into Calcitonin and Calcitonin gene-related peptide 1 (CGRP) by competing with splicing regulator TIAR for binding to U-rich intronic sequences of CALCA pre-mRNA. This is ELAV-like protein 4 (ELAVL4) from Homo sapiens (Human).